We begin with the raw amino-acid sequence, 1442 residues long: Protein patched homolog 1 (1442 aa).

The disordered stretch occupies residues 1 to 45 (MASAADALEPESGSSTAGGGSHPVRAARSARGRRRRSGGTRRAAA). At 1-101 (MASAADALEP…GCYIQKNCGK (101 aa)) the chain is on the cytoplasmic side. The segment covering 28–39 (RSARGRRRRSGG) has biased composition (basic residues). Residues 102-122 (FLVVGLLYSAFAVGLRAANLE) traverse the membrane as a helical segment. At 123 to 436 (TNVEELWVEV…LDDILKSFSD (314 aa)) the chain is on the extracellular side. Asn-141, Asn-312, Asn-349, and Asn-414 each carry an N-linked (GlcNAc...) asparagine glycan. A helical transmembrane segment spans residues 437–457 (VSVIRVASGYLLMLAYACLTM). The region spanning 438–598 (SVIRVASGYL…LLIFPAILSM (161 aa)) is the SSD domain. Residues 458–472 (LRWDCAKSQGAVGLA) are Cytoplasmic-facing. A helical transmembrane segment spans residues 473–493 (GVLLVALSVAAGLGLCSLIGI). Residues 494-501 (SFNAATTQ) lie on the Extracellular side of the membrane. A helical transmembrane segment spans residues 502–522 (VLPFLALGVGVDDVFLLAHAF). Residues 523–547 (SETGQNKRIPFEDRTGECLKRTGAS) lie on the Cytoplasmic side of the membrane. The helical transmembrane segment at 548-568 (VALTSISNVTAFFMAALIPIP) threads the bilayer. Topologically, residues 569-577 (ALRAFSLQA) are extracellular. The helical transmembrane segment at 578-598 (AVVVVFNFAMVLLIFPAILSM) threads the bilayer. Topologically, residues 599–747 (DLYRREDRRL…HYAPFLLKPK (149 aa)) are cytoplasmic. Residues 748–768 (AKVVVIFLFLGLLGLSLYGTT) traverse the membrane as a helical segment. Residues 769 to 1026 (RVRDGLDLTD…WEQYIGLRHW (258 aa)) are Extracellular-facing. Asn-827, Asn-874, and Asn-999 each carry an N-linked (GlcNAc...) asparagine glycan. Residues 1027–1047 (LLLSISVVLACTFLVCALFLL) traverse the membrane as a helical segment. Topologically, residues 1048-1053 (NPWTAG) are cytoplasmic. The chain crosses the membrane as a helical span at residues 1054–1074 (IIVVVLALMTVELFGMMGLIG). The Extracellular portion of the chain corresponds to 1075–1082 (IKLSAVPV). A helical transmembrane segment spans residues 1083-1101 (VILIASVGIGVEFTVHIAL). Residues 1102–1120 (AFLTAIGDKNRRAVLALEH) are Cytoplasmic-facing. The chain crosses the membrane as a helical span at residues 1121-1141 (MFAPVLDGAVSTLLGVLMLAG). Residues 1142–1153 (SEFDFIVRYFFA) lie on the Extracellular side of the membrane. The helical transmembrane segment at 1154-1174 (VLAILTILGVLNGLVLLPVLL) threads the bilayer. Over 1175–1442 (SFFGPYPEVS…EERTAGKISE (268 aa)) the chain is Cytoplasmic. 2 disordered regions span residues 1188 to 1231 (GRNR…TTVS) and 1266 to 1338 (STVV…LNHK). The segment covering 1217–1226 (SDSSDSEYSS) has biased composition (low complexity). Positions 1276-1293 (QSSPRLQSNPEAGTQQVW) are enriched in polar residues.

The protein belongs to the patched family. In terms of processing, glycosylation is necessary for SHH binding. In terms of tissue distribution, expression is seen in the embryonic neural tube, sclerotome, visceral mesoderm, and limb bud.

Its subcellular location is the membrane. Acts as a receptor for sonic hedgehog (SHH), indian hedgehog (IHH) and desert hedgehog (DHH). Associates with the smoothened protein (SMO) to transduce the hedgehog's proteins signal. The sequence is that of Protein patched homolog 1 (PTCH1) from Gallus gallus (Chicken).